The following is an 812-amino-acid chain: Toll-like receptor 10 (812 aa).

Positions 1 to 19 are cleaved as a signal peptide; the sequence is MRYIRSIYIFCSIVTSVRS. Over 20 to 577 the chain is Extracellular; it reads GASELPEERE…VHLPEISCNT (558 aa). LRR repeat units lie at residues 24-46, 49-70, 73-94, 97-118, and 119-139; these read LPEE…PEGL, ITTT…DFRS, KLKV…TFEF, ELSY…SLAG, and LRHL…VETG. Residue N33 is glycosylated (N-linked (GlcNAc...) asparagine). The N-linked (GlcNAc...) asparagine glycan is linked to N140. The stretch at 143-166 is one LRR 6 repeat; it reads HLETLGLSGAKIQKSDFQKIAHLQ. N189 carries N-linked (GlcNAc...) asparagine glycosylation. 4 LRR repeats span residues 296–321, 325–348, 350–373, and 374–395; these read SNTV…ESIY, TKMD…PMYP, RFQY…IQLP, and HLKT…SHFA. An N-linked (GlcNAc...) asparagine glycan is attached at N331. N397 carries N-linked (GlcNAc...) asparagine glycosylation. LRR repeat units follow at residues 399-420, 423-443, 445-467, 468-489, and 490-510; these read SLRH…NCLW, TLVT…GCLP, NIQI…THLT, SLRE…SHFR, and RLLV…DFFQ. N428 is a glycosylation site (N-linked (GlcNAc...) asparagine). In terms of domain architecture, LRRCT spans 523 to 577; that stretch reads NPFRCTCELRDFIQLGKYSEGMMVGWSDSYICEYPLNLKGTQLKDVHLPEISCNT. A helical transmembrane segment spans residues 578–598; that stretch reads GLLIVTIVVVMLVLGMAVAFC. At 599 to 812 the chain is on the cytoplasmic side; it reads CLHFDLPWYL…AISLIRTDCL (214 aa). Residues 633–776 form the TIR domain; that stretch reads VQFHVFISYS…LFWANLRAAL (144 aa).

It belongs to the Toll-like receptor family. Binds MYD88 via their respective TIR domains.

The protein resides in the membrane. Participates in the innate immune response to microbial agents. Acts via MYD88 and TRAF6, leading to NF-kappa-B activation, cytokine secretion and the inflammatory response. This chain is Toll-like receptor 10 (TLR10), found in Bos taurus (Bovine).